A 516-amino-acid chain; its full sequence is MVTMDNSDKIYDLIGSANNNDVDSQNELVRVFVHNCFIRSVLTFAKPFKWNNIVENAIQDSNYTYFILCFHGHKYNRVKYQEIYKKIIDGLFLRISKSSSLDALTYNNLGFIYHNDIFKKNKVIKVISHYCKAVNMNSKHAQYNLATFIRLNYYKQEFVKLLSKTVFKDSTLPISKEIIFKKIYELYKLSASQFNPNAEHSLSTTCEFREFIGQKERDKWLKKSAKNGLSISQYSIGTKYLGGDVTNRKYQKGIIYLKNSAKQGDTGSQISLINIYSKEYGKNIMTNINEMMYWYLNCEQYTSFFMNIFDVFPIVCNTMEIDNKSNEENQNITNIETIILSKIQLLLVKIKYDCVCNNSITITNILDELENKFFKIIESRQKIQNSSSIFYISQMRLVDSVYQNIIDQQNKTGIIPFVKNYLVDEEIYMSIGFDSIEICDQLEILLNNDMYAENIVELLWRLDELCKEKSYYSKILKITNMLENYRSQVITFLEDNLTLRENYFFKKYKHIQRNYF.

2 Sel1-like repeats span residues 103–138 (ALTYNNLGFIYHNDIFKKNKVIKVISHYCKAVNMNS) and 230–265 (SISQYSIGTKYLGGDVTNRKYQKGIIYLKNSAKQGD).

The protein is Putative sel1-like repeat-containing protein R850 of Acanthamoeba polyphaga (Amoeba).